We begin with the raw amino-acid sequence, 419 residues long: Keratin, type I cytoskeletal 47 kDa (419 aa).

The interval 1–81 (MSFRSSSSYS…SSSFSNFGGN (81 aa)) is head. Residues 82-117 (DKQTMQNLNDRLASYLEKVRALEAANADLELKIREW) form a coil 1A region. Residues 82-397 (DKQTMQNLND…RLLEGEFGSL (316 aa)) form the IF rod domain. Positions 118-139 (YEKQKGSGIGAGSKDFSKYFEI) are linker 1. The segment at 140–231 (ISDLRNKILS…KNHEEEMSIA (92 aa)) is coil 1B. The tract at residues 232-254 (KSSSAGQVNVEMDAAPGIDLNKI) is linker 12. The segment at 255–393 (LSDMRADYET…ETYRRLLEGE (139 aa)) is coil 2. The segment at 394–419 (FGSLKSSIVQATEVSTSQSSSSSKKD) is tail.

This sequence belongs to the intermediate filament family. Heterotetramer of two type I and two type II keratins.

In Xenopus laevis (African clawed frog), this protein is Keratin, type I cytoskeletal 47 kDa (xk81b2).